The primary structure comprises 172 residues: 3-hydroxydecanoyl-[acyl-carrier-protein] dehydratase (172 aa).

H71 is a catalytic residue.

Belongs to the thioester dehydratase family. FabA subfamily. Homodimer.

The protein resides in the cytoplasm. It carries out the reaction a (3R)-hydroxyacyl-[ACP] = a (2E)-enoyl-[ACP] + H2O. The enzyme catalyses (3R)-hydroxydecanoyl-[ACP] = (2E)-decenoyl-[ACP] + H2O. The catalysed reaction is (2E)-decenoyl-[ACP] = (3Z)-decenoyl-[ACP]. It functions in the pathway lipid metabolism; fatty acid biosynthesis. Its function is as follows. Necessary for the introduction of cis unsaturation into fatty acids. Catalyzes the dehydration of (3R)-3-hydroxydecanoyl-ACP to E-(2)-decenoyl-ACP and then its isomerization to Z-(3)-decenoyl-ACP. Can catalyze the dehydratase reaction for beta-hydroxyacyl-ACPs with saturated chain lengths up to 16:0, being most active on intermediate chain length. This is 3-hydroxydecanoyl-[acyl-carrier-protein] dehydratase from Salmonella agona (strain SL483).